Here is a 650-residue protein sequence, read N- to C-terminus: MSTQSLYKVSSEIAENAHINEEQYKKMYQESIVNPEGFWREHGQRIDWIKPYTKIKKTSFDDHNLSINWFYDGTLNASANCLDRHLEKDSDKVAIIWEGDDAKDQRTITYGELHSDVCKFANALRSQGVRRGDIVTVYMPMVPEAAVVMLACARIGAVHSVVFGGFSPDSIASRVIDGKSKVIITADEGVRGGRIIPLKANIDEALSHPDVDCVEKVIVLERTGGDVNWVEGRDIKWESLMDTASEHCIPEEMGAEDPLFLLYTSGSTGNPKGVLHTTGGYMVYAAMTHEYVFDYKDGEVYWCTADVGWITGHSYMVYGPLANGATVLIHEGVPNYPTPARLGEMVDRHKVNILYTAPTLIRALMAEGKEQFADFDGSSLRIMGSVGEPINPEAWRWYNEVIGHEHCPIVDTWWQTETGGILISPLPGATDTKPGSATRPFFGVQPALVDNMGNIIDGATEGNLVILDSWPGQMRTVFGDHDRFALTYFKTFRGMYFTGDGAKRDEDGYYWITGRVDDVINVSGHRLGTAEVESALVAHEHVAEAAVVGYPHDIKGQGIYAYVTLTKGTIETEELRQELRKWVRKEIGALATPDLIQWAGGLPKTRSGKIMRRFLRKIAANEVTNLGDSSTLADPAVIDTLIESRLNRSE.

Residues 191–194, threonine 311, and asparagine 335 contribute to the CoA site; that span reads RGGR. ATP is bound by residues 387 to 389, 411 to 416, aspartate 500, and arginine 515; these read GEP and DTWWQT. A CoA-binding site is contributed by serine 523. Arginine 526 contacts ATP. Residues valine 537, histidine 539, and valine 542 each contribute to the Mg(2+) site. Arginine 584 provides a ligand contact to CoA. An N6-acetyllysine modification is found at lysine 609.

It belongs to the ATP-dependent AMP-binding enzyme family. It depends on Mg(2+) as a cofactor. Post-translationally, acetylated. Deacetylation by the SIR2-homolog deacetylase activates the enzyme.

The enzyme catalyses acetate + ATP + CoA = acetyl-CoA + AMP + diphosphate. Catalyzes the conversion of acetate into acetyl-CoA (AcCoA), an essential intermediate at the junction of anabolic and catabolic pathways. AcsA undergoes a two-step reaction. In the first half reaction, AcsA combines acetate with ATP to form acetyl-adenylate (AcAMP) intermediate. In the second half reaction, it can then transfer the acetyl group from AcAMP to the sulfhydryl group of CoA, forming the product AcCoA. The protein is Acetyl-coenzyme A synthetase of Shewanella sediminis (strain HAW-EB3).